We begin with the raw amino-acid sequence, 201 residues long: ATP-dependent Clp protease proteolytic subunit (201 aa).

The active-site Nucleophile is the serine 98. The active site involves histidine 123.

The protein belongs to the peptidase S14 family. Fourteen ClpP subunits assemble into 2 heptameric rings which stack back to back to give a disk-like structure with a central cavity, resembling the structure of eukaryotic proteasomes.

It is found in the cytoplasm. It carries out the reaction Hydrolysis of proteins to small peptides in the presence of ATP and magnesium. alpha-casein is the usual test substrate. In the absence of ATP, only oligopeptides shorter than five residues are hydrolyzed (such as succinyl-Leu-Tyr-|-NHMec, and Leu-Tyr-Leu-|-Tyr-Trp, in which cleavage of the -Tyr-|-Leu- and -Tyr-|-Trp bonds also occurs).. Its function is as follows. Cleaves peptides in various proteins in a process that requires ATP hydrolysis. Has a chymotrypsin-like activity. Plays a major role in the degradation of misfolded proteins. The protein is ATP-dependent Clp protease proteolytic subunit of Desulfatibacillum aliphaticivorans.